The chain runs to 77 residues: Acyl carrier protein (77 aa).

One can recognise a Carrier domain in the interval S2–T77. S37 is modified (O-(pantetheine 4'-phosphoryl)serine).

The protein belongs to the acyl carrier protein (ACP) family. 4'-phosphopantetheine is transferred from CoA to a specific serine of apo-ACP by AcpS. This modification is essential for activity because fatty acids are bound in thioester linkage to the sulfhydryl of the prosthetic group.

Its subcellular location is the cytoplasm. Its pathway is lipid metabolism; fatty acid biosynthesis. Its function is as follows. Carrier of the growing fatty acid chain in fatty acid biosynthesis. The protein is Acyl carrier protein of Geobacter metallireducens (strain ATCC 53774 / DSM 7210 / GS-15).